The sequence spans 268 residues: Minor capsid protein VP2 (268 aa).

The span at 132–144 (STPQSLGALTGRT) shows a compositional bias: polar residues. The interval 132–199 (STPQSLGALT…SLSSAARTRS (68 aa)) is disordered. Residues 145–163 (NSRVSAPARSSPSALSNAP) show a composition bias toward low complexity. The segment covering 164-178 (TATSLHSNQTVSTRL) has biased composition (polar residues). Positions 179–195 (GSSAGSGTGVSSLSSAA) are enriched in low complexity.

Belongs to the norovirus VP2 family. As to quaternary structure, homooligomer. The portal-like structure consists in 12 copies of VP2. Interacts with capsid protein VP1.

It is found in the virion. The protein resides in the host cytoplasm. Its function is as follows. Minor structural protein that forms a portal-like structure at a unique three-fold axis of symmetry, following binding to the host receptor. The channel formed by VP2 may allow the delivery of the viral genome through the host endosomal membrane. The sequence is that of Minor capsid protein VP2 from Lordsdale virus (strain GII/Human/United Kingdom/Lordsdale/1993) (Human enteric calicivirus).